Here is a 239-residue protein sequence, read N- to C-terminus: Ribonuclease P protein component 3 (239 aa).

Belongs to the eukaryotic/archaeal RNase P protein component 3 family. Consists of a catalytic RNA component and at least 4-5 protein subunits.

It localises to the cytoplasm. It catalyses the reaction Endonucleolytic cleavage of RNA, removing 5'-extranucleotides from tRNA precursor.. In terms of biological role, part of ribonuclease P, a protein complex that generates mature tRNA molecules by cleaving their 5'-ends. The polypeptide is Ribonuclease P protein component 3 (Methanosarcina acetivorans (strain ATCC 35395 / DSM 2834 / JCM 12185 / C2A)).